Here is a 485-residue protein sequence, read N- to C-terminus: Glutamyl-tRNA(Gln) amidotransferase subunit A (485 aa).

Active-site charge relay system residues include K79 and S154. S178 acts as the Acyl-ester intermediate in catalysis.

Belongs to the amidase family. GatA subfamily. Heterotrimer of A, B and C subunits.

It carries out the reaction L-glutamyl-tRNA(Gln) + L-glutamine + ATP + H2O = L-glutaminyl-tRNA(Gln) + L-glutamate + ADP + phosphate + H(+). Its function is as follows. Allows the formation of correctly charged Gln-tRNA(Gln) through the transamidation of misacylated Glu-tRNA(Gln) in organisms which lack glutaminyl-tRNA synthetase. The reaction takes place in the presence of glutamine and ATP through an activated gamma-phospho-Glu-tRNA(Gln). The polypeptide is Glutamyl-tRNA(Gln) amidotransferase subunit A (Staphylococcus saprophyticus subsp. saprophyticus (strain ATCC 15305 / DSM 20229 / NCIMB 8711 / NCTC 7292 / S-41)).